The chain runs to 549 residues: Hydroxylamine reductase (549 aa).

C5, C8, C17, and C23 together coordinate [4Fe-4S] cluster. Hybrid [4Fe-2O-2S] cluster-binding residues include H242, E266, C310, C402, C430, C455, E490, and K492. C402 is modified (cysteine persulfide).

The protein belongs to the HCP family. [4Fe-4S] cluster serves as cofactor. Requires hybrid [4Fe-2O-2S] cluster as cofactor.

The protein localises to the cytoplasm. The catalysed reaction is A + NH4(+) + H2O = hydroxylamine + AH2 + H(+). Catalyzes the reduction of hydroxylamine to form NH(3) and H(2)O. The sequence is that of Hydroxylamine reductase from Clostridium novyi (strain NT).